A 61-amino-acid chain; its full sequence is Small ribosomal subunit protein uS14 (61 aa).

Zn(2+)-binding residues include Cys-24, Cys-27, Cys-40, and Cys-43.

The protein belongs to the universal ribosomal protein uS14 family. Zinc-binding uS14 subfamily. Part of the 30S ribosomal subunit. Contacts proteins S3 and S10. The cofactor is Zn(2+).

Its function is as follows. Binds 16S rRNA, required for the assembly of 30S particles and may also be responsible for determining the conformation of the 16S rRNA at the A site. In Clostridium beijerinckii (strain ATCC 51743 / NCIMB 8052) (Clostridium acetobutylicum), this protein is Small ribosomal subunit protein uS14.